A 347-amino-acid chain; its full sequence is Succinylglutamate desuccinylase (347 aa).

Zn(2+) contacts are provided by histidine 64, glutamate 67, and histidine 159. Glutamate 222 is a catalytic residue.

The protein belongs to the AspA/AstE family. Succinylglutamate desuccinylase subfamily. Zn(2+) is required as a cofactor.

It catalyses the reaction N-succinyl-L-glutamate + H2O = L-glutamate + succinate. It participates in amino-acid degradation; L-arginine degradation via AST pathway; L-glutamate and succinate from L-arginine: step 5/5. Its function is as follows. Transforms N(2)-succinylglutamate into succinate and glutamate. This is Succinylglutamate desuccinylase from Burkholderia cenocepacia (strain ATCC BAA-245 / DSM 16553 / LMG 16656 / NCTC 13227 / J2315 / CF5610) (Burkholderia cepacia (strain J2315)).